The following is a 242-amino-acid chain: MSDDFAESVTEANAESDTETAADAESSAAEDASAADDAAPEESTGDEQAGETTAESSDAESVTVSERVAEYDDELAAEVEALEARVADLEASVADLETERDEAEETASDLESRLKRTQADFQNYKKRAKKRQQQIKERATEDFVERVVTVRDNLVRALDQDEDADIRDGIESTLKEFDRILEDENVEIIDPEPGTDVDPTRHEVMMRVESDQPADTIADVFQPGYEMAEKVIRAAQVTVSKE.

2 disordered regions span residues Met-1–Leu-75 and Val-93–Lys-136. Low complexity predominate over residues Asp-23–Asp-37. Acidic residues predominate over residues Ala-38–Ala-49. Residues Gly-50–Val-64 show a composition bias toward polar residues. The segment covering Leu-96–Ser-108 has biased composition (acidic residues). Positions Tyr-124–Gln-133 are enriched in basic residues.

Belongs to the GrpE family. In terms of assembly, homodimer.

It is found in the cytoplasm. Its function is as follows. Participates actively in the response to hyperosmotic and heat shock by preventing the aggregation of stress-denatured proteins, in association with DnaK and GrpE. It is the nucleotide exchange factor for DnaK and may function as a thermosensor. Unfolded proteins bind initially to DnaJ; upon interaction with the DnaJ-bound protein, DnaK hydrolyzes its bound ATP, resulting in the formation of a stable complex. GrpE releases ADP from DnaK; ATP binding to DnaK triggers the release of the substrate protein, thus completing the reaction cycle. Several rounds of ATP-dependent interactions between DnaJ, DnaK and GrpE are required for fully efficient folding. The protein is Protein GrpE of Haloferax mediterranei (strain ATCC 33500 / DSM 1411 / JCM 8866 / NBRC 14739 / NCIMB 2177 / R-4) (Halobacterium mediterranei).